The sequence spans 300 residues: Tyrosine recombinase XerC (300 aa).

Residues 1 to 86 enclose the Core-binding (CB) domain; sequence MESVLDAFDQ…AVKTFTAWAV (86 aa). Residues 107–294 form the Tyr recombinase domain; sequence TLPAVLRQDQ…TVARLRAVHD (188 aa). Catalysis depends on residues Arg151, Lys175, His246, Arg249, and His272. Tyr281 serves as the catalytic O-(3'-phospho-DNA)-tyrosine intermediate.

Belongs to the 'phage' integrase family. XerC subfamily. As to quaternary structure, forms a cyclic heterotetrameric complex composed of two molecules of XerC and two molecules of XerD.

It is found in the cytoplasm. Site-specific tyrosine recombinase, which acts by catalyzing the cutting and rejoining of the recombining DNA molecules. The XerC-XerD complex is essential to convert dimers of the bacterial chromosome into monomers to permit their segregation at cell division. It also contributes to the segregational stability of plasmids. The polypeptide is Tyrosine recombinase XerC (Mycobacterium sp. (strain JLS)).